Here is a 300-residue protein sequence, read N- to C-terminus: tRNA-cytidine(32) 2-sulfurtransferase (300 aa).

Positions 57-62 match the PP-loop motif motif; that stretch reads SGGKDS. [4Fe-4S] cluster-binding residues include Cys132, Cys135, and Cys223.

It belongs to the TtcA family. Homodimer. It depends on Mg(2+) as a cofactor. The cofactor is [4Fe-4S] cluster.

The protein resides in the cytoplasm. The enzyme catalyses cytidine(32) in tRNA + S-sulfanyl-L-cysteinyl-[cysteine desulfurase] + AH2 + ATP = 2-thiocytidine(32) in tRNA + L-cysteinyl-[cysteine desulfurase] + A + AMP + diphosphate + H(+). It functions in the pathway tRNA modification. Its function is as follows. Catalyzes the ATP-dependent 2-thiolation of cytidine in position 32 of tRNA, to form 2-thiocytidine (s(2)C32). The sulfur atoms are provided by the cysteine/cysteine desulfurase (IscS) system. This Xanthomonas campestris pv. campestris (strain B100) protein is tRNA-cytidine(32) 2-sulfurtransferase.